The following is a 360-amino-acid chain: Chorismate synthase (360 aa).

The segment at 36–60 is disordered; the sequence is LSEDDIQPDLDRRKPGTSKYTTPRR. Arg48 serves as a coordination point for NADP(+). FMN contacts are provided by residues 125 to 127, 246 to 247, Gly286, 301 to 305, and Arg327; these read RSS, NA, and KPTSS.

The protein belongs to the chorismate synthase family. In terms of assembly, homotetramer. The cofactor is FMNH2.

The enzyme catalyses 5-O-(1-carboxyvinyl)-3-phosphoshikimate = chorismate + phosphate. Its pathway is metabolic intermediate biosynthesis; chorismate biosynthesis; chorismate from D-erythrose 4-phosphate and phosphoenolpyruvate: step 7/7. Functionally, catalyzes the anti-1,4-elimination of the C-3 phosphate and the C-6 proR hydrogen from 5-enolpyruvylshikimate-3-phosphate (EPSP) to yield chorismate, which is the branch point compound that serves as the starting substrate for the three terminal pathways of aromatic amino acid biosynthesis. This reaction introduces a second double bond into the aromatic ring system. The sequence is that of Chorismate synthase from Histophilus somni (strain 129Pt) (Haemophilus somnus).